A 115-amino-acid chain; its full sequence is Large ribosomal subunit protein bL20 (115 aa).

It belongs to the bacterial ribosomal protein bL20 family.

In terms of biological role, binds directly to 23S ribosomal RNA and is necessary for the in vitro assembly process of the 50S ribosomal subunit. It is not involved in the protein synthesizing functions of that subunit. The protein is Large ribosomal subunit protein bL20 of Borrelia hermsii (strain HS1 / DAH).